A 196-amino-acid polypeptide reads, in one-letter code: Pro-FMRFamide-related neuropeptide VF (196 aa).

The N-terminal stretch at 1–26 (MEIISSKLFILLTLATSSLLTSNIFC) is a signal peptide. The propeptide occupies 27-55 (ADELVMSNLHSKENYDKYSEPRGYPKGER). F92 is subject to Phenylalanine amide. Propeptides lie at residues 95–99 (NVQEE) and 115–121 (NMEVSLV). Residue F131 is modified to Phenylalanine amide. Positions 134 to 196 (TTTAKSVCRM…IDDAELKQEK (63 aa)) are excised as a propeptide.

It belongs to the FARP (FMRFamide related peptide) family. Specifically expressed in the retina. In terms of tissue distribution, detected in the hypothalamus.

Its subcellular location is the secreted. In terms of biological role, efficiently inhibits forskolin-induced production of cAMP. Acts as a potent negative regulator of gonadotropin synthesis and secretion. Induces secretion of prolactin. Its function is as follows. Efficiently inhibits forskolin-induced production of cAMP. Blocks morphine-induced analgesia. Shows no inhibitory activity of forskolin-induced production of cAMP. This chain is Pro-FMRFamide-related neuropeptide VF, found in Homo sapiens (Human).